The following is a 205-amino-acid chain: Small ribosomal subunit protein uS4c (205 aa).

The S4 RNA-binding domain maps to 93 to 154 (MRLDNTIFRL…RTQTIALIQQ (62 aa)).

This sequence belongs to the universal ribosomal protein uS4 family. As to quaternary structure, part of the 30S ribosomal subunit. Contacts protein S5. The interaction surface between S4 and S5 is involved in control of translational fidelity.

Its subcellular location is the plastid. It localises to the chloroplast. One of the primary rRNA binding proteins, it binds directly to 16S rRNA where it nucleates assembly of the body of the 30S subunit. Functionally, with S5 and S12 plays an important role in translational accuracy. This Chaetosphaeridium globosum (Charophycean green alga) protein is Small ribosomal subunit protein uS4c (rps4).